The primary structure comprises 571 residues: Glutamine--tRNA ligase (571 aa).

Positions 35–45 (PEPNGYLHIGH) match the 'HIGH' region motif. ATP contacts are provided by residues 36–38 (EPN) and 42–48 (HIGHAKS). Residues aspartate 68 and tyrosine 213 each coordinate L-glutamine. ATP-binding positions include threonine 232, 262–263 (RL), and 270–272 (LSK). The short motif at 269 to 273 (ILSKR) is the 'KMSKS' region element.

Belongs to the class-I aminoacyl-tRNA synthetase family. In terms of assembly, monomer.

The protein resides in the cytoplasm. It catalyses the reaction tRNA(Gln) + L-glutamine + ATP = L-glutaminyl-tRNA(Gln) + AMP + diphosphate. The polypeptide is Glutamine--tRNA ligase (Buchnera aphidicola subsp. Acyrthosiphon pisum (strain Tuc7)).